A 210-amino-acid chain; its full sequence is Orotate phosphoribosyltransferase (210 aa).

5-phospho-alpha-D-ribose 1-diphosphate-binding positions include Arg-94, Lys-98, His-100, and 120 to 128 (EDLISTGGS). Ser-124 is a binding site for orotate.

The protein belongs to the purine/pyrimidine phosphoribosyltransferase family. PyrE subfamily. In terms of assembly, homodimer. The cofactor is Mg(2+).

It carries out the reaction orotidine 5'-phosphate + diphosphate = orotate + 5-phospho-alpha-D-ribose 1-diphosphate. It functions in the pathway pyrimidine metabolism; UMP biosynthesis via de novo pathway; UMP from orotate: step 1/2. Its function is as follows. Catalyzes the transfer of a ribosyl phosphate group from 5-phosphoribose 1-diphosphate to orotate, leading to the formation of orotidine monophosphate (OMP). The sequence is that of Orotate phosphoribosyltransferase from Bacillus cereus (strain B4264).